The sequence spans 336 residues: Holliday junction branch migration complex subunit RuvB (336 aa).

Positions 1–185 are large ATPase domain (RuvB-L); sequence MSIIVERLLS…FGVLSRVEYY (185 aa). ATP contacts are provided by residues Leu-24, Arg-25, Gly-66, Lys-69, Thr-70, Thr-71, 132-134, Arg-175, Tyr-185, and Arg-222; that span reads EDF. Thr-70 is a Mg(2+) binding site. The small ATPAse domain (RuvB-S) stretch occupies residues 186 to 256; it reads TVDQLSAIVE…ITQMALELLQ (71 aa). The head domain (RuvB-H) stretch occupies residues 259–336; it reads KLGLDHIDHK…EHFGMEIPKV (78 aa). The DNA site is built by Arg-314 and Arg-319.

This sequence belongs to the RuvB family. In terms of assembly, homohexamer. Forms an RuvA(8)-RuvB(12)-Holliday junction (HJ) complex. HJ DNA is sandwiched between 2 RuvA tetramers; dsDNA enters through RuvA and exits via RuvB. An RuvB hexamer assembles on each DNA strand where it exits the tetramer. Each RuvB hexamer is contacted by two RuvA subunits (via domain III) on 2 adjacent RuvB subunits; this complex drives branch migration. In the full resolvosome a probable DNA-RuvA(4)-RuvB(12)-RuvC(2) complex forms which resolves the HJ.

The protein localises to the cytoplasm. It carries out the reaction ATP + H2O = ADP + phosphate + H(+). In terms of biological role, the RuvA-RuvB-RuvC complex processes Holliday junction (HJ) DNA during genetic recombination and DNA repair, while the RuvA-RuvB complex plays an important role in the rescue of blocked DNA replication forks via replication fork reversal (RFR). RuvA specifically binds to HJ cruciform DNA, conferring on it an open structure. The RuvB hexamer acts as an ATP-dependent pump, pulling dsDNA into and through the RuvAB complex. RuvB forms 2 homohexamers on either side of HJ DNA bound by 1 or 2 RuvA tetramers; 4 subunits per hexamer contact DNA at a time. Coordinated motions by a converter formed by DNA-disengaged RuvB subunits stimulates ATP hydrolysis and nucleotide exchange. Immobilization of the converter enables RuvB to convert the ATP-contained energy into a lever motion, pulling 2 nucleotides of DNA out of the RuvA tetramer per ATP hydrolyzed, thus driving DNA branch migration. The RuvB motors rotate together with the DNA substrate, which together with the progressing nucleotide cycle form the mechanistic basis for DNA recombination by continuous HJ branch migration. Branch migration allows RuvC to scan DNA until it finds its consensus sequence, where it cleaves and resolves cruciform DNA. This Bacillus cereus (strain ATCC 14579 / DSM 31 / CCUG 7414 / JCM 2152 / NBRC 15305 / NCIMB 9373 / NCTC 2599 / NRRL B-3711) protein is Holliday junction branch migration complex subunit RuvB.